The following is a 401-amino-acid chain: Flagellin D (401 aa).

It belongs to the bacterial flagellin family.

The protein localises to the secreted. Its subcellular location is the bacterial flagellum. Its function is as follows. Flagellin is the subunit protein which polymerizes to form the filaments of bacterial flagella. The protein is Flagellin D (flaD) of Rhizobium meliloti (strain 1021) (Ensifer meliloti).